Reading from the N-terminus, the 96-residue chain is Co-chaperonin GroES (96 aa).

The protein belongs to the GroES chaperonin family. In terms of assembly, heptamer of 7 subunits arranged in a ring. Interacts with the chaperonin GroEL.

It is found in the cytoplasm. Functionally, together with the chaperonin GroEL, plays an essential role in assisting protein folding. The GroEL-GroES system forms a nano-cage that allows encapsulation of the non-native substrate proteins and provides a physical environment optimized to promote and accelerate protein folding. GroES binds to the apical surface of the GroEL ring, thereby capping the opening of the GroEL channel. The sequence is that of Co-chaperonin GroES from Shewanella sediminis (strain HAW-EB3).